Reading from the N-terminus, the 690-residue chain is Elongation factor G (690 aa).

The tr-type G domain maps to 8 to 283 (SRCRNIGIMA…AVVDFLPSPS (276 aa)). GTP is bound by residues 17-24 (AHIDAGKT), 81-85 (DTPGH), and 135-138 (NKMD).

Belongs to the TRAFAC class translation factor GTPase superfamily. Classic translation factor GTPase family. EF-G/EF-2 subfamily.

The protein localises to the cytoplasm. In terms of biological role, catalyzes the GTP-dependent ribosomal translocation step during translation elongation. During this step, the ribosome changes from the pre-translocational (PRE) to the post-translocational (POST) state as the newly formed A-site-bound peptidyl-tRNA and P-site-bound deacylated tRNA move to the P and E sites, respectively. Catalyzes the coordinated movement of the two tRNA molecules, the mRNA and conformational changes in the ribosome. The polypeptide is Elongation factor G (Anaplasma marginale (strain St. Maries)).